The following is a 358-amino-acid chain: 3-dehydroquinate synthase (358 aa).

NAD(+) is bound by residues 104-108, 128-129, Lys140, Lys149, and 167-170; these read GVIGD, TT, and FLNT. Residues Glu182, His246, and His260 each contribute to the Zn(2+) site.

It belongs to the sugar phosphate cyclases superfamily. Dehydroquinate synthase family. Requires Co(2+) as cofactor. The cofactor is Zn(2+). NAD(+) serves as cofactor.

It localises to the cytoplasm. The enzyme catalyses 7-phospho-2-dehydro-3-deoxy-D-arabino-heptonate = 3-dehydroquinate + phosphate. Its pathway is metabolic intermediate biosynthesis; chorismate biosynthesis; chorismate from D-erythrose 4-phosphate and phosphoenolpyruvate: step 2/7. Catalyzes the conversion of 3-deoxy-D-arabino-heptulosonate 7-phosphate (DAHP) to dehydroquinate (DHQ). In Staphylococcus carnosus (strain TM300), this protein is 3-dehydroquinate synthase.